The primary structure comprises 143 residues: MWLQNLLLLGTVVCSFSAPTRPPNTATRPWQHVDAIKEALSLLNHSSDTDAVMNDTEVVSEKFDSQEPTCLQTRLKLYKNGLQGSLTSLMGSLTMMATHYEKHCPPTPETSCGTQFISFKNFKEDLKEFLFIIPFDCWEPAQK.

Positions 1-17 are cleaved as a signal peptide; sequence MWLQNLLLLGTVVCSFS. A glycan (O-linked (GalNAc...) threonine) is linked at Thr27. N-linked (GlcNAc...) asparagine glycosylation is found at Asn44 and Asn54. Intrachain disulfides connect Cys70/Cys112 and Cys104/Cys137.

It belongs to the GM-CSF family. Monomer. The signaling GM-CSF receptor complex is a dodecamer of two head-to-head hexamers of two alpha, two beta, and two ligand subunits.

The protein localises to the secreted. Cytokine that stimulates the growth and differentiation of hematopoietic precursor cells from various lineages, including granulocytes, macrophages, eosinophils and erythrocytes. The chain is Granulocyte-macrophage colony-stimulating factor (CSF2) from Bos taurus (Bovine).